A 302-amino-acid chain; its full sequence is Taste receptor type 2 member 104 (302 aa).

Over 1-7 the chain is Extracellular; the sequence is MLSALES. A helical membrane pass occupies residues 8–28; that stretch reads ILLSVATSEAMLGVLGNTFIV. At 29-43 the chain is on the cytoplasmic side; it reads LVNYTDWVRNKKLSK. A helical membrane pass occupies residues 44–64; it reads INFILTGLAISRIFTIWIITL. Over 65-87 the chain is Extracellular; that stretch reads DAYTKVFLLTMLMPSSLHECMSY. Residues 88–108 traverse the membrane as a helical segment; it reads IWVIINHLSVWFSTSLGIFYF. Topologically, residues 109–128 are cytoplasmic; sequence LKIANFSHYIFLWMKRRADK. Residues 129–149 form a helical membrane-spanning segment; sequence VFVFLIVFLIITWLASFPLAV. The Extracellular segment spans residues 150-182; that stretch reads KVIKDVKIYQSNTSWLIHLEKSELLINYVFANM. Asn161 carries an N-linked (GlcNAc...) asparagine glycan. A helical transmembrane segment spans residues 183–203; it reads GPISLFIVAIIACFLLTISLW. Residues 204 to 229 are Cytoplasmic-facing; sequence RHSRQMQSIGSGFRDLNTEAHMKAMK. The chain crosses the membrane as a helical span at residues 230–250; the sequence is VLIAFIILFILYFLGILIETL. Residues 251–259 are Extracellular-facing; that stretch reads CLFLTNNKL. The helical transmembrane segment at 260–280 threads the bilayer; sequence LFIFGFTLSAMYPCCHSFILI. The Cytoplasmic portion of the chain corresponds to 281-302; it reads LTSRELKQATMRALQRLKCCET.

Belongs to the G-protein coupled receptor T2R family.

The protein resides in the membrane. Its function is as follows. Putative taste receptor which may play a role in the perception of bitterness. The chain is Taste receptor type 2 member 104 from Mus musculus (Mouse).